The sequence spans 193 residues: MQNIKCVVVGDGAVGKTCMLISYTTNGFPSEYIPTVFDNYCANLMLEGKPYSLGLWDTAGQEDYDRLRPLSYPHTDVFLICFSIISQASFENVTTKWFKEVNHHAPGVPIILVGTKQDIRNDNDSIKKLKEKNIELVPYEKGLEKAKEINAIYLEASALTQRGIKDVFDQCIRSVIYPNKLIKKPKKKSCTIM.

10–17 contacts GTP; that stretch reads GDGAVGKT. Residues 32 to 40 carry the Effector region motif; it reads YIPTVFDNY. GTP is bound by residues 57 to 61 and 115 to 118; these read DTAGQ and TKQD. The residue at position 190 (Cys-190) is a Cysteine methyl ester. A lipid anchor (S-geranylgeranyl cysteine) is attached at Cys-190. Residues 191-193 constitute a propeptide, removed in mature form; it reads TIM.

It belongs to the small GTPase superfamily. Rho family. Interacts with pakB.

The protein resides in the membrane. Might act in concert and/or share functions with other members of the RHO family in the regulation of a subset of cytoskeletal rearrangements that are required for these processes. The chain is Rho-related protein racF1 (racF1) from Dictyostelium discoideum (Social amoeba).